The following is a 478-amino-acid chain: Methionine aminopeptidase 2-1 (478 aa).

The tract at residues 1–124 is disordered; it reads MGSKSPEGHN…PRVPLSTLFP (124 aa). The segment covering 46–56 has biased composition (acidic residues); the sequence is NDDDDADDDEK. Basic residues predominate over residues 92–104; it reads KKKKKRKRSKKKA. H230 is a binding site for substrate. A divalent metal cation is bound by residues D251, D262, and H331. A substrate-binding site is contributed by H339. A divalent metal cation contacts are provided by E364 and E459.

This sequence belongs to the peptidase M24A family. Methionine aminopeptidase eukaryotic type 2 subfamily. It depends on Co(2+) as a cofactor. Zn(2+) is required as a cofactor. The cofactor is Mn(2+). Fe(2+) serves as cofactor.

Its subcellular location is the cytoplasm. It catalyses the reaction Release of N-terminal amino acids, preferentially methionine, from peptides and arylamides.. In terms of biological role, cotranslationally removes the N-terminal methionine from nascent proteins. The N-terminal methionine is often cleaved when the second residue in the primary sequence is small and uncharged (Met-Ala-, Cys, Gly, Pro, Ser, Thr, or Val). This chain is Methionine aminopeptidase 2-1, found in Aspergillus clavatus (strain ATCC 1007 / CBS 513.65 / DSM 816 / NCTC 3887 / NRRL 1 / QM 1276 / 107).